A 384-amino-acid chain; its full sequence is Lipoprotein LprN (384 aa).

An N-terminal signal peptide occupies residues 1–20 (MNRIWLRAIILTASSALLAG). A lipid anchor (N-palmitoyl cysteine) is attached at Cys21. Cys21 carries S-diacylglycerol cysteine lipidation.

In terms of processing, lipidated upon expression in E.coli.

It localises to the cell membrane. Stimulates the host (mouse) immune response; lipidated protein produced in E.coli stimulates T-cell proliferation in mice previously sensitized with LprN. Spleenocytes from these mice produce increased amounts of TNF-alpha and IFN-gamma, as well as somewhat increased nitric oxide levels, upon subsequent challenge with LprN. Previously sensitized mice infected with M.tuberculosis have an exacerbated disease response, suggesting this lipoprotein may down-regulate the host's immune response. The protein is Lipoprotein LprN (lprN) of Mycobacterium tuberculosis (strain ATCC 25618 / H37Rv).